The sequence spans 860 residues: MEPRQELLDPERVREEAKRIVRWLCGLVDRTGKLPAGDYQGKILNTVSEICKRSKLPCGELAEALTKGRLTRSLVDYSELLISNLVVGYFDVLEIYLGKQSVRLSDIREMACKYTFYAINRRLEDYIKFQTAWLQARAMRDVTPEPEAPSWLNEGFGRCFSALLNRKVHLRCVLRARPNDVSLAASLYQVKRVAPPLPDDQIEKNLEKSLDRLTKDEEPAGVDEPFLEDLKRECKRTVDELVQNARREGWNRKISRDCFPSQSAAFENPISKGGQLGQLVKENNTPRLPVLLGMFEYKGRVTPVYGWADDGDTILSDEELGREVPAALKCRRSPVLEPFKVRVITMGPAVQYYRARRVQGCLWDLLKHTRCTHLPNRPVEESDIGFYVRRRGADLFRGEEVPYVSGDYSAATDNLHPDLSLSVVDRVCDHLLSDDNRPLDPVSPWRVLFHRVLVGHRIYDGNSSRNTEVAAQSWGQLMGSPLSFPVLCIVNLAVTRYVLEKACGRIVTLEESGILVNGDDILFRCPERTIPFWTRMVTIAGLSPSPGKNFVSYRYCQLNSELYDMSGSRAEYLPFIKANLIYGTLARGCERKRAADLCYGDTTTEGGTFGHRARALIKGFGPDMQDRLMSRFLHSIKGFLEKIPEVSWFIHPRYGGLGLPLTRPVTHNPYHLRIAAYLSCGGEQSQEARCMMQWLSAPTKSFNAATLLRILEVARNCKVPFRKVPFALLHRAEAAGVDLEALFRKALLRSAPRLGVEYPSNESGDMQRLGDWRRFFRDVGRKAARTRCRSGTADERKGLFLMSPDNAVKGPQYEYIFDWASHNMGGNIWDPSYKFRADPFSSSESDEPRAKEIGPNRGPE.

A disordered region spans residues 839–860; that stretch reads PFSSSESDEPRAKEIGPNRGPE. Residues 846-860 are compositionally biased toward basic and acidic residues; that stretch reads DEPRAKEIGPNRGPE.

The protein belongs to the ssRNA positive-strand viruses RNA-directed RNA polymerase family.

It catalyses the reaction RNA(n) + a ribonucleoside 5'-triphosphate = RNA(n+1) + diphosphate. Its function is as follows. RNA-dependent RNA polymerase which replicates the viral genome. The protein is RNA-dependent RNA polymerase of Ourmia melon virus (isolate Melon/Iran/VE9) (OuMV).